The following is a 273-amino-acid chain: Dermonecrotic toxin LhSicTox-alphaIA2bvi (273 aa).

Histidine 5 is an active-site residue. Residues glutamate 25 and aspartate 27 each contribute to the Mg(2+) site. Histidine 41 acts as the Nucleophile in catalysis. 2 disulfides stabilise this stretch: cysteine 45/cysteine 51 and cysteine 47/cysteine 190. Aspartate 85 contributes to the Mg(2+) binding site.

It belongs to the arthropod phospholipase D family. Class II subfamily. The cofactor is Mg(2+). As to expression, expressed by the venom gland.

It is found in the secreted. It catalyses the reaction an N-(acyl)-sphingosylphosphocholine = an N-(acyl)-sphingosyl-1,3-cyclic phosphate + choline. The enzyme catalyses an N-(acyl)-sphingosylphosphoethanolamine = an N-(acyl)-sphingosyl-1,3-cyclic phosphate + ethanolamine. It carries out the reaction a 1-acyl-sn-glycero-3-phosphocholine = a 1-acyl-sn-glycero-2,3-cyclic phosphate + choline. The catalysed reaction is a 1-acyl-sn-glycero-3-phosphoethanolamine = a 1-acyl-sn-glycero-2,3-cyclic phosphate + ethanolamine. In terms of biological role, dermonecrotic toxins cleave the phosphodiester linkage between the phosphate and headgroup of certain phospholipids (sphingolipid and lysolipid substrates), forming an alcohol (often choline) and a cyclic phosphate. This toxin acts on sphingomyelin (SM). It may also act on ceramide phosphoethanolamine (CPE), lysophosphatidylcholine (LPC) and lysophosphatidylethanolamine (LPE), but not on lysophosphatidylserine (LPS), and lysophosphatidylglycerol (LPG). It acts by transphosphatidylation, releasing exclusively cyclic phosphate products as second products. Induces dermonecrosis, hemolysis, increased vascular permeability, edema, inflammatory response, and platelet aggregation. The sequence is that of Dermonecrotic toxin LhSicTox-alphaIA2bvi from Loxosceles hirsuta (Recluse spider).